The primary structure comprises 386 residues: Probable protein phosphatase 2C 36 (386 aa).

In terms of domain architecture, PPM-type phosphatase spans 60–363; it reads ELSVAVVQGN…DDITVIVLFI (304 aa). Positions 94, 95, 295, and 354 each coordinate Mn(2+).

It belongs to the PP2C family. Requires Mg(2+) as cofactor. It depends on Mn(2+) as a cofactor.

The enzyme catalyses O-phospho-L-seryl-[protein] + H2O = L-seryl-[protein] + phosphate. The catalysed reaction is O-phospho-L-threonyl-[protein] + H2O = L-threonyl-[protein] + phosphate. In Oryza sativa subsp. japonica (Rice), this protein is Probable protein phosphatase 2C 36.